The chain runs to 264 residues: 3-methyl-2-oxobutanoate hydroxymethyltransferase (264 aa).

Mg(2+) contacts are provided by Asp-45 and Asp-84. 3-methyl-2-oxobutanoate contacts are provided by residues 45 to 46 (DS), Asp-84, and Lys-112. A Mg(2+)-binding site is contributed by Glu-114. The Proton acceptor role is filled by Glu-181.

This sequence belongs to the PanB family. As to quaternary structure, homodecamer; pentamer of dimers. Mg(2+) is required as a cofactor.

It localises to the cytoplasm. The enzyme catalyses 3-methyl-2-oxobutanoate + (6R)-5,10-methylene-5,6,7,8-tetrahydrofolate + H2O = 2-dehydropantoate + (6S)-5,6,7,8-tetrahydrofolate. It functions in the pathway cofactor biosynthesis; (R)-pantothenate biosynthesis; (R)-pantoate from 3-methyl-2-oxobutanoate: step 1/2. In terms of biological role, catalyzes the reversible reaction in which hydroxymethyl group from 5,10-methylenetetrahydrofolate is transferred onto alpha-ketoisovalerate to form ketopantoate. This Edwardsiella ictaluri (strain 93-146) protein is 3-methyl-2-oxobutanoate hydroxymethyltransferase.